The following is a 355-amino-acid chain: Protein ATP1B4 (355 aa).

At Met-1–Ser-108 the chain is on the nuclear side. The segment at Ala-33–Asp-77 is disordered. The span at Asp-50–Glu-68 shows a compositional bias: acidic residues. The helical; Signal-anchor for type II membrane protein transmembrane segment at Leu-109–Met-129 threads the bilayer. The Perinuclear space segment spans residues Tyr-130–Thr-355.

This sequence belongs to the X(+)/potassium ATPases subunit beta family. Associates with a SMAD7-transcriptional complex. Interacts with SNW1 and TOR1AIP1. Does not associate with known Na,K-ATPase alpha-subunits.

The protein resides in the nucleus inner membrane. Functionally, may act as a transcriptional coregulator during muscle development through its interaction with SNW1. Has lost its ancestral function as a Na,K-ATPase beta-subunit. The polypeptide is Protein ATP1B4 (ATP1B4) (Bos taurus (Bovine)).